The following is a 331-amino-acid chain: MKVTVLVGGVGGARFLLGVQHLLGLGQFARDDARGPDAHELTAVVNVGDDTWMFGVRICPDLDTCMYTLGGGIDPDRGWGHRDETWHAKEELAAYGVQPDWFGLGDRDLATHLVRSQMLRAGYPLSQVTEALCDRWNPGARLLPASDDRSETHVVITDPDTDERRAIHFQEWWVRYRAKVPTHSFAFVGADKATTAPGVTDAIADADVVLLAPSNPVVSIGSILAIPGIRGALRSTSAKIIGYSPIIAGKPLRGMADECLSVIGVASTSEAVGRHYGARSGTGILDGWLVHEGDSAQIDGVQVEAVPLLMTDPATTAEMVRAGVRLAGVTL.

Position 63 (Asp-63) interacts with 7,8-didemethyl-8-hydroxy-5-deazariboflavin.

It belongs to the CofD family. In terms of assembly, homodimer. It depends on Mg(2+) as a cofactor.

The catalysed reaction is enolpyruvoyl-2-diphospho-5'-guanosine + 7,8-didemethyl-8-hydroxy-5-deazariboflavin = dehydro coenzyme F420-0 + GMP + H(+). It participates in cofactor biosynthesis; coenzyme F420 biosynthesis. Its function is as follows. Catalyzes the transfer of the phosphoenolpyruvate moiety from enoylpyruvoyl-2-diphospho-5'-guanosine (EPPG) to 7,8-didemethyl-8-hydroxy-5-deazariboflavin (FO) with the formation of dehydro coenzyme F420-0 and GMP. This is Phosphoenolpyruvate transferase from Mycobacterium sp. (strain KMS).